Here is a 448-residue protein sequence, read N- to C-terminus: Glutamyl-tRNA reductase 2 (448 aa).

Residues 50–53 (TCER), Ser-109, 114–116 (ESD), and Gln-120 contribute to the substrate site. The active-site Nucleophile is Cys-51. Residue 190-195 (GTGQVA) participates in NADP(+) binding. The interval 423 to 448 (DQAVPAYSPQPIGNTSNAAASATPRR) is disordered. Residues 433–442 (PIGNTSNAAA) are compositionally biased toward polar residues.

This sequence belongs to the glutamyl-tRNA reductase family. Homodimer.

It carries out the reaction (S)-4-amino-5-oxopentanoate + tRNA(Glu) + NADP(+) = L-glutamyl-tRNA(Glu) + NADPH + H(+). The protein operates within porphyrin-containing compound metabolism; protoporphyrin-IX biosynthesis; 5-aminolevulinate from L-glutamyl-tRNA(Glu): step 1/2. In terms of biological role, catalyzes the NADPH-dependent reduction of glutamyl-tRNA(Glu) to glutamate 1-semialdehyde (GSA). The protein is Glutamyl-tRNA reductase 2 of Nocardioides sp. (strain ATCC BAA-499 / JS614).